Consider the following 89-residue polypeptide: Small ribosomal subunit protein uS15 (89 aa).

The protein belongs to the universal ribosomal protein uS15 family. In terms of assembly, part of the 30S ribosomal subunit. Forms a bridge to the 50S subunit in the 70S ribosome, contacting the 23S rRNA.

One of the primary rRNA binding proteins, it binds directly to 16S rRNA where it helps nucleate assembly of the platform of the 30S subunit by binding and bridging several RNA helices of the 16S rRNA. Functionally, forms an intersubunit bridge (bridge B4) with the 23S rRNA of the 50S subunit in the ribosome. This chain is Small ribosomal subunit protein uS15, found in Chlorobaculum parvum (strain DSM 263 / NCIMB 8327) (Chlorobium vibrioforme subsp. thiosulfatophilum).